A 346-amino-acid polypeptide reads, in one-letter code: Glycosyltransferase 1 domain-containing protein 1 (346 aa).

A signal peptide spans 1-16; sequence MRLLFLAVLRPHTGNA.

The protein belongs to the glycosyltransferase group 1 family. Glycosyltransferase 4 subfamily.

The protein resides in the secreted. This Homo sapiens (Human) protein is Glycosyltransferase 1 domain-containing protein 1 (GLT1D1).